The following is a 187-amino-acid chain: MVNEFEKLQSGKLLLASANLLESNFKRTVLIICEHNESGSLGFILNRPMEFKVCEAVAGFEEIEEPLHMGGPVQVDTVHFLHSRGDIIDGATEIFPGLFWGGDKNQVSFLLNTGVMQPSEIRFFLGYSGWSAGQLEEEFEIGSWYIAEASRDVIFSDAYERMWSRSVRSKGGEYQIVANAPELPGLN.

It belongs to the UPF0301 (AlgH) family.

This chain is UPF0301 protein Cpha266_0885, found in Chlorobium phaeobacteroides (strain DSM 266 / SMG 266 / 2430).